Here is a 490-residue protein sequence, read N- to C-terminus: Cardiolipin synthase A (490 aa).

2 helical membrane passes run 4–24 (YLFT…IIIV) and 39–59 (AAWL…WFLL). PLD phosphodiesterase domains are found at residues 220-247 (MDLR…VDPY) and 403-430 (KKGL…DMRS). Active-site residues include H225, K227, D232, H408, K410, and D415.

This sequence belongs to the phospholipase D family. Cardiolipin synthase subfamily. ClsA sub-subfamily.

The protein localises to the cell membrane. It carries out the reaction 2 a 1,2-diacyl-sn-glycero-3-phospho-(1'-sn-glycerol) = a cardiolipin + glycerol. Catalyzes the reversible phosphatidyl group transfer from one phosphatidylglycerol molecule to another to form cardiolipin (CL) (diphosphatidylglycerol) and glycerol. This chain is Cardiolipin synthase A, found in Buchnera aphidicola subsp. Baizongia pistaciae (strain Bp).